The following is a 101-amino-acid chain: Phosphoribosyl-AMP cyclohydrolase (101 aa).

Asp71 contacts Mg(2+). Residue Cys72 participates in Zn(2+) binding. Mg(2+) contacts are provided by Asp73 and Asp75. The Zn(2+) site is built by Cys88 and Cys95.

The protein belongs to the PRA-CH family. In terms of assembly, homodimer. Requires Mg(2+) as cofactor. The cofactor is Zn(2+).

Its subcellular location is the cytoplasm. It catalyses the reaction 1-(5-phospho-beta-D-ribosyl)-5'-AMP + H2O = 1-(5-phospho-beta-D-ribosyl)-5-[(5-phospho-beta-D-ribosylamino)methylideneamino]imidazole-4-carboxamide. It functions in the pathway amino-acid biosynthesis; L-histidine biosynthesis; L-histidine from 5-phospho-alpha-D-ribose 1-diphosphate: step 3/9. Functionally, catalyzes the hydrolysis of the adenine ring of phosphoribosyl-AMP. The protein is Phosphoribosyl-AMP cyclohydrolase of Bacillus cereus (strain ATCC 14579 / DSM 31 / CCUG 7414 / JCM 2152 / NBRC 15305 / NCIMB 9373 / NCTC 2599 / NRRL B-3711).